Consider the following 793-residue polypeptide: Wall-associated receptor kinase-like 18 (793 aa).

An N-terminal signal peptide occupies residues 1-28; it reads MSNESTNCSFFLNLFMLLLLLIFYSADA. At 29 to 378 the chain is on the extracellular side; sequence CQRECGGISI…YRCVRDKTKA (350 aa). Asn60, Asn130, Asn170, Asn238, Asn285, and Asn304 each carry an N-linked (GlcNAc...) asparagine glycan. Residues 312–371 are atypical EGF-like; it reads CTCGRITISETSYANCGCTYGYTGNPYVLNGCKDIDECKVKFEYCGKTETCVNFEGGYRC. Cystine bridges form between Cys314–Cys327, Cys349–Cys362, and Cys356–Cys371. Residues 379–399 form a helical membrane-spanning segment; that stretch reads IMIGAGTGFGVLVLVGGLWWL. The Cytoplasmic portion of the chain corresponds to 400–793; the sequence is RKFLIKRRIT…VEPLFPRLTW (394 aa). The Protein kinase domain maps to 453-728; the sequence is FSENRVLGHG…REVFTELERI (276 aa). ATP contacts are provided by residues 459–467 and Lys481; that span reads LGHGGQGTV. The residue at position 526 (Tyr526) is a Phosphotyrosine. Asp579 functions as the Proton acceptor in the catalytic mechanism. Phosphothreonine occurs at positions 613 and 618. The residue at position 626 (Tyr626) is a Phosphotyrosine. Residues 733 to 757 form a disordered region; sequence EDSQVHNRIDEEEEEEEEEEEVVTT. The span at 742–754 shows a compositional bias: acidic residues; that stretch reads DEEEEEEEEEEEV.

This sequence belongs to the protein kinase superfamily. Ser/Thr protein kinase family.

The protein localises to the membrane. The catalysed reaction is L-seryl-[protein] + ATP = O-phospho-L-seryl-[protein] + ADP + H(+). The enzyme catalyses L-threonyl-[protein] + ATP = O-phospho-L-threonyl-[protein] + ADP + H(+). Serine/threonine-protein kinase that may function as a signaling receptor of extracellular matrix component. In Arabidopsis thaliana (Mouse-ear cress), this protein is Wall-associated receptor kinase-like 18 (WAKL18).